The sequence spans 283 residues: Shikimate dehydrogenase (NADP(+)) (283 aa).

Shikimate contacts are provided by residues 22 to 24 (SRS) and threonine 69. Lysine 73 (proton acceptor) is an active-site residue. Asparagine 93 and aspartate 108 together coordinate shikimate. Residues 133–137 (GAGGS) and leucine 222 contribute to the NADP(+) site. Residue tyrosine 224 participates in shikimate binding. Glycine 245 lines the NADP(+) pocket.

It belongs to the shikimate dehydrogenase family. In terms of assembly, homodimer.

It carries out the reaction shikimate + NADP(+) = 3-dehydroshikimate + NADPH + H(+). It functions in the pathway metabolic intermediate biosynthesis; chorismate biosynthesis; chorismate from D-erythrose 4-phosphate and phosphoenolpyruvate: step 4/7. In terms of biological role, involved in the biosynthesis of the chorismate, which leads to the biosynthesis of aromatic amino acids. Catalyzes the reversible NADPH linked reduction of 3-dehydroshikimate (DHSA) to yield shikimate (SA). This chain is Shikimate dehydrogenase (NADP(+)), found in Rhodopseudomonas palustris (strain BisB5).